The chain runs to 222 residues: Peptidyl-prolyl cis-trans isomerase FKBP7 (222 aa).

Positions 1–23 (MPKTMHFLFRFIVFFYLWGLFTA) are cleaved as a signal peptide. Residue Asn45 is glycosylated (N-linked (GlcNAc...) asparagine). Residues 53–145 (GDLLNAHYDG…IFEIELYAVT (93 aa)) enclose the PPIase FKBP-type domain. 2 EF-hand domains span residues 145–180 (TKGP…EFEK) and 189–222 (YQDA…HDEL). Residues Asp158, Asp160, Asp162, Gln164, Glu169, Asp202, Asp204, Asp206, and Glu213 each coordinate Ca(2+). The disordered stretch occupies residues 200-222 (KNDHDGDGFISPKEYNVYQHDEL). A Retention in the endoplasmic reticulum motif is present at residues 219–222 (HDEL).

In terms of processing, glycosylated.

The protein localises to the endoplasmic reticulum lumen. The enzyme catalyses [protein]-peptidylproline (omega=180) = [protein]-peptidylproline (omega=0). Functionally, PPIases accelerate the folding of proteins during protein synthesis. The protein is Peptidyl-prolyl cis-trans isomerase FKBP7 (FKBP7) of Homo sapiens (Human).